The sequence spans 350 residues: Phosphoribosylformylglycinamidine cyclo-ligase (350 aa).

The protein belongs to the AIR synthase family.

It is found in the cytoplasm. The catalysed reaction is 2-formamido-N(1)-(5-O-phospho-beta-D-ribosyl)acetamidine + ATP = 5-amino-1-(5-phospho-beta-D-ribosyl)imidazole + ADP + phosphate + H(+). The protein operates within purine metabolism; IMP biosynthesis via de novo pathway; 5-amino-1-(5-phospho-D-ribosyl)imidazole from N(2)-formyl-N(1)-(5-phospho-D-ribosyl)glycinamide: step 2/2. The chain is Phosphoribosylformylglycinamidine cyclo-ligase from Cupriavidus necator (strain ATCC 17699 / DSM 428 / KCTC 22496 / NCIMB 10442 / H16 / Stanier 337) (Ralstonia eutropha).